We begin with the raw amino-acid sequence, 208 residues long: Large ribosomal subunit protein uL4 (208 aa).

The protein belongs to the universal ribosomal protein uL4 family. In terms of assembly, part of the 50S ribosomal subunit.

In terms of biological role, one of the primary rRNA binding proteins, this protein initially binds near the 5'-end of the 23S rRNA. It is important during the early stages of 50S assembly. It makes multiple contacts with different domains of the 23S rRNA in the assembled 50S subunit and ribosome. Functionally, forms part of the polypeptide exit tunnel. This chain is Large ribosomal subunit protein uL4, found in Anaplasma marginale (strain Florida).